A 214-amino-acid polypeptide reads, in one-letter code: Probable nicotinate-nucleotide adenylyltransferase (214 aa).

This sequence belongs to the NadD family.

It carries out the reaction nicotinate beta-D-ribonucleotide + ATP + H(+) = deamido-NAD(+) + diphosphate. It participates in cofactor biosynthesis; NAD(+) biosynthesis; deamido-NAD(+) from nicotinate D-ribonucleotide: step 1/1. In terms of biological role, catalyzes the reversible adenylation of nicotinate mononucleotide (NaMN) to nicotinic acid adenine dinucleotide (NaAD). The sequence is that of Probable nicotinate-nucleotide adenylyltransferase from Mycobacterium tuberculosis (strain ATCC 25177 / H37Ra).